The primary structure comprises 247 residues: Cell division protein ZapD (247 aa).

This sequence belongs to the ZapD family. As to quaternary structure, interacts with FtsZ.

Its subcellular location is the cytoplasm. Functionally, cell division factor that enhances FtsZ-ring assembly. Directly interacts with FtsZ and promotes bundling of FtsZ protofilaments, with a reduction in FtsZ GTPase activity. The polypeptide is Cell division protein ZapD (Klebsiella pneumoniae (strain 342)).